The following is a 977-amino-acid chain: DNA-directed RNA polymerase 3A, chloroplastic (977 aa).

Residues 1–72 constitute a chloroplast transit peptide; it reads MASTASYSPS…NNIQSQTTVC (72 aa). Residues D678, K753, and D910 contribute to the active site.

Belongs to the phage and mitochondrial RNA polymerase family.

The protein localises to the plastid. It is found in the chloroplast. It catalyses the reaction RNA(n) + a ribonucleoside 5'-triphosphate = RNA(n+1) + diphosphate. Its function is as follows. DNA-dependent RNA polymerase catalyzes the transcription of DNA into RNA using the four ribonucleoside triphosphates as substrates. The chain is DNA-directed RNA polymerase 3A, chloroplastic (RPOT3-SYL) from Nicotiana tabacum (Common tobacco).